We begin with the raw amino-acid sequence, 274 residues long: Rhamnulose-1-phosphate aldolase (274 aa).

The active site involves E117. Zn(2+) is bound by residues H141, H143, and H212.

Belongs to the aldolase class II family. RhaD subfamily. In terms of assembly, homotetramer. The cofactor is Zn(2+).

It is found in the cytoplasm. It carries out the reaction L-rhamnulose 1-phosphate = (S)-lactaldehyde + dihydroxyacetone phosphate. It participates in carbohydrate degradation; L-rhamnose degradation; glycerone phosphate from L-rhamnose: step 3/3. In terms of biological role, catalyzes the reversible cleavage of L-rhamnulose-1-phosphate to dihydroxyacetone phosphate (DHAP) and L-lactaldehyde. The chain is Rhamnulose-1-phosphate aldolase from Escherichia coli O6:H1 (strain CFT073 / ATCC 700928 / UPEC).